Reading from the N-terminus, the 71-residue chain is Translation initiation factor IF-1 (71 aa).

Residues 1–71 (MAKDAIKLRA…TKGRITYRHK (71 aa)) enclose the S1-like domain.

This sequence belongs to the IF-1 family. In terms of assembly, component of the 30S ribosomal translation pre-initiation complex which assembles on the 30S ribosome in the order IF-2 and IF-3, IF-1 and N-formylmethionyl-tRNA(fMet); mRNA recruitment can occur at any time during PIC assembly.

It localises to the cytoplasm. Its function is as follows. One of the essential components for the initiation of protein synthesis. Stabilizes the binding of IF-2 and IF-3 on the 30S subunit to which N-formylmethionyl-tRNA(fMet) subsequently binds. Helps modulate mRNA selection, yielding the 30S pre-initiation complex (PIC). Upon addition of the 50S ribosomal subunit IF-1, IF-2 and IF-3 are released leaving the mature 70S translation initiation complex. The protein is Translation initiation factor IF-1 of Mycoplasmopsis synoviae (strain 53) (Mycoplasma synoviae).